The chain runs to 927 residues: Echinoderm microtubule-associated protein-like 4 (927 aa).

Positions methionine 1 to aspartate 189 are microtubule-binding. Residues alanine 14 to arginine 63 adopt a coiled-coil conformation. Positions asparagine 85–arginine 132 are disordered. The span at serine 116 to arginine 132 shows a compositional bias: basic and acidic residues. 13 WD repeats span residues leucine 199 to tyrosine 237, threonine 241 to serine 288, valine 296 to tryptophan 336, alanine 343 to tryptophan 378, arginine 385 to lysine 424, glutamine 442 to histidine 480, glutamate 485 to threonine 521, aspartate 524 to serine 563, serine 567 to alanine 604, valine 610 to valine 646, tyrosine 653 to isoleucine 692, arginine 702 to tyrosine 760, and alanine 767 to leucine 806. The segment covering asparagine 815–valine 829 has biased composition (polar residues). Positions asparagine 815–serine 927 are disordered. Residues alanine 914 to serine 927 are compositionally biased toward acidic residues.

It belongs to the WD repeat EMAP family. In terms of assembly, homotrimer; self-association is mediated by the N-terminal coiled coil.

It is found in the cytoplasm. Its subcellular location is the cytoskeleton. The protein localises to the spindle. It localises to the microtubule organizing center. The protein resides in the midbody. Its function is as follows. Essential for the formation and stability of microtubules (MTs). Required for the organization of the mitotic spindle and for the proper attachment of kinetochores to MTs. Promotes the recruitment of NUDC to the mitotic spindle for mitotic progression. The protein is Echinoderm microtubule-associated protein-like 4 (eml4) of Xenopus laevis (African clawed frog).